We begin with the raw amino-acid sequence, 345 residues long: Very-long-chain 3-oxoacyl-CoA reductase (345 aa).

The helical transmembrane segment at 26 to 46 (GAAVLLATGGLFLASRVLTFV) threads the bilayer. Val-71, Asp-125, Asp-133, Asn-152, Tyr-219, Lys-223, Ile-252, and Ser-254 together coordinate NADP(+). Tyr-219 serves as the catalytic Proton donor. Catalysis depends on Lys-223, which acts as the Lowers pKa of active site Tyr.

Belongs to the short-chain dehydrogenases/reductases (SDR) family.

Its subcellular location is the endoplasmic reticulum membrane. The catalysed reaction is a very-long-chain (3R)-3-hydroxyacyl-CoA + NADP(+) = a very-long-chain 3-oxoacyl-CoA + NADPH + H(+). The protein operates within lipid metabolism; fatty acid biosynthesis. Functionally, component of the microsomal membrane bound fatty acid elongation system, which produces the 26-carbon very long-chain fatty acids (VLCFA) from palmitate. Catalyzes the reduction of the 3-ketoacyl-CoA intermediate that is formed in each cycle of fatty acid elongation. VLCFAs serve as precursors for ceramide and sphingolipids. This chain is Very-long-chain 3-oxoacyl-CoA reductase, found in Aspergillus clavatus (strain ATCC 1007 / CBS 513.65 / DSM 816 / NCTC 3887 / NRRL 1 / QM 1276 / 107).